The primary structure comprises 509 residues: AAA ATPase forming ring-shaped complexes (509 aa).

Positions 11 to 50 (AHLQRTISNLSARNAKLAELLKASRDKLSILQDQLEDLAA) form a coiled coil. 236 to 241 (GCGKTL) serves as a coordination point for ATP.

The protein belongs to the AAA ATPase family. Homohexamer. Assembles into a hexameric ring structure.

This chain is AAA ATPase forming ring-shaped complexes, found in Corynebacterium diphtheriae (strain ATCC 700971 / NCTC 13129 / Biotype gravis).